Here is a 260-residue protein sequence, read N- to C-terminus: GTP cyclohydrolase FolE2 (260 aa).

This sequence belongs to the GTP cyclohydrolase IV family.

The enzyme catalyses GTP + H2O = 7,8-dihydroneopterin 3'-triphosphate + formate + H(+). Its pathway is cofactor biosynthesis; 7,8-dihydroneopterin triphosphate biosynthesis; 7,8-dihydroneopterin triphosphate from GTP: step 1/1. Functionally, converts GTP to 7,8-dihydroneopterin triphosphate. In Desulfosudis oleivorans (strain DSM 6200 / JCM 39069 / Hxd3) (Desulfococcus oleovorans), this protein is GTP cyclohydrolase FolE2.